We begin with the raw amino-acid sequence, 311 residues long: tRNA(Ile)-lysidine synthase (311 aa).

31 to 36 contacts ATP; the sequence is SGGKDS.

Belongs to the tRNA(Ile)-lysidine synthase family.

The protein localises to the cytoplasm. It carries out the reaction cytidine(34) in tRNA(Ile2) + L-lysine + ATP = lysidine(34) in tRNA(Ile2) + AMP + diphosphate + H(+). In terms of biological role, ligates lysine onto the cytidine present at position 34 of the AUA codon-specific tRNA(Ile) that contains the anticodon CAU, in an ATP-dependent manner. Cytidine is converted to lysidine, thus changing the amino acid specificity of the tRNA from methionine to isoleucine. The protein is tRNA(Ile)-lysidine synthase of Petrotoga mobilis (strain DSM 10674 / SJ95).